A 340-amino-acid polypeptide reads, in one-letter code: HTH-type transcriptional regulator PtxS (340 aa).

One can recognise an HTH lacI-type domain in the interval 12-67 (VTINQVAEAAGVSKASVSRYIGGDRQLLADATARRIERAIDQLDYRPNQMARGLKR). Residues 14 to 33 (INQVAEAAGVSKASVSRYIG) constitute a DNA-binding region (H-T-H motif).

As to quaternary structure, interacts with PtxR in the absence of 2-ketogluconate. Binding of the 2-ketogluconate effector to PtxS causes PtxS/PtxR complex dissociation.

With respect to regulation, 2-ketogluconate acts as a molecular effector and causes dissociation of the PtxS/PtxR complex. In terms of biological role, negatively regulates glucose metabolism by binding directly to the promoter region of the kgu and gad operons. It also negatively regulates its own synthesis. Its function is as follows. In addition, in pathogenic strains, PtxS modulates PtxR activity in response to 2-ketogluconate. In the presence of PtxR, which also binds to the kgu and gad promoter regions, PtxS and PtxR form a tight complex, creating a DNA-loop that prevents RNA polymerase promoter access and expression of the glucose metabolism genes. Binding of the 2-ketogluconate effector to PtxS causes PtxS/PtxR complex dissociation and leads to the dissolution of the repression DNA-loop, facilitating the entry of the RNA polymerase and enabling the transcription of the genes. Also plays an important role in the regulation of the expression of the virulence factor exotoxin A (toxA). PtxS does not bind directly to the toxA promoter but negatively regulates the production of exotoxin A by binding to PtxR and interfering with its positive regulator activity. In the presence of 2-ketogluconate, PtxS is released and PtxR can recruit RNA polymerase. This Pseudomonas aeruginosa (strain ATCC 15692 / DSM 22644 / CIP 104116 / JCM 14847 / LMG 12228 / 1C / PRS 101 / PAO1) protein is HTH-type transcriptional regulator PtxS.